We begin with the raw amino-acid sequence, 355 residues long: Guanine nucleotide-binding protein alpha-12 subunit (355 aa).

The region spanning 28–355 (RQINLLLLGS…EQNLKTLMMQ (328 aa)) is the G-alpha domain. Residues 31–44 (NLLLLGSGESGKST) are G1 motif. Residues 36–43 (GSGESGKS), 176–182 (LFCRKAT), 201–205 (DVGGQ), 270–273 (NKND), and Ala327 contribute to the GTP site. Residues Ser43 and Thr182 each contribute to the Mg(2+) site. The G2 motif stretch occupies residues 174 to 182 (DILFCRKAT). The interval 197-206 (FRFIDVGGQR) is G3 motif. Positions 266 to 273 (ILFMNKND) are G4 motif. Residues 325–330 (TTAVDT) are G5 motif.

This sequence belongs to the G-alpha family. G proteins are composed of 3 units; alpha, beta and gamma. The alpha chain contains the guanine nucleotide binding site.

Its function is as follows. Guanine nucleotide-binding proteins (G proteins) are involved as modulators or transducers in various transmembrane signaling systems. May play a role in resistance to fungal infection in the epidermis by regulating the up-regulation of several antimicrobial peptides of the NLP and CNC families. Upstream of plc-3, tpa-1 and the p38-like pathway, required for the expression of antimicrobial peptide nlp-29 in the epidermis in response to fungal infection or physical injury. The protein is Guanine nucleotide-binding protein alpha-12 subunit (gpa-12) of Caenorhabditis elegans.